Here is a 415-residue protein sequence, read N- to C-terminus: Vascular endothelial growth factor C (415 aa).

The N-terminal stretch at 1 to 31 (MHLLCFLSLACSLLAAALIPGPREAPATVAA) is a signal peptide. Positions 32-107 (FESGLGFSEA…RTGDTVKLAA (76 aa)) are excised as a propeptide. 3 disulfides stabilise this stretch: C127–C169, C158–C205, and C162–C207. N171, N201, and N236 each carry an N-linked (GlcNAc...) asparagine glycan. The propeptide occupies 224–415 (SLPATLPQCQ…PSYWKRPHLN (192 aa)). A run of 4 repeats spans residues 276 to 291 (CGPN…QCVC), 300 to 315 (CGPH…QCVC), 324 to 339 (CGAN…QCVC), and 343 to 358 (CPRN…ACEC). The 4 X 16 AA repeats of C-X(10)-C-X-C-X(1,3)-C stretch occupies residues 276 to 358 (CGPNKELDED…LNPGKCACEC (83 aa)).

It belongs to the PDGF/VEGF growth factor family. Homodimer; non-covalent and antiparallel. Interacts with FLT4/VEGFR3; the interaction is required for FLT4/VEGFR3 homodimarization and activation. Undergoes a complex proteolytic maturation which generates a variety of processed secreted forms with increased activity toward VEGFR-3, but only the fully processed form could activate VEGFR-2. VEGF-C first form an antiparallel homodimer linked by disulfide bonds. Before secretion, a cleavage occurs between Arg-223 and Ser-224 producing a heterotetramer. The next extracellular step of the processing removes the N-terminal propeptide. Finally the mature VEGF-C is composed mostly of two VEGF homology domains (VHDs) bound by non-covalent interactions. In terms of tissue distribution, highly expressed in the lung, ovary, preputial gland and the adrenal gland. Expressed in the post-pubertal mammary glands.

Its subcellular location is the secreted. Growth factor active in angiogenesis, and endothelial cell growth, stimulating their proliferation and migration and also has effects on the permeability of blood vessels. May function in angiogenesis of the venous and lymphatic vascular systems during embryogenesis, and also in the maintenance of differentiated lymphatic endothelium in adults. Binds and activates KDR/VEGFR2 and FLT4/VEGFR3 receptors. This is Vascular endothelial growth factor C (Vegfc) from Rattus norvegicus (Rat).